A 186-amino-acid polypeptide reads, in one-letter code: Adenine phosphoribosyltransferase (186 aa).

This sequence belongs to the purine/pyrimidine phosphoribosyltransferase family. Homodimer.

It localises to the cytoplasm. The enzyme catalyses AMP + diphosphate = 5-phospho-alpha-D-ribose 1-diphosphate + adenine. It participates in purine metabolism; AMP biosynthesis via salvage pathway; AMP from adenine: step 1/1. Catalyzes a salvage reaction resulting in the formation of AMP, that is energically less costly than de novo synthesis. This Xanthomonas campestris pv. campestris (strain B100) protein is Adenine phosphoribosyltransferase.